Reading from the N-terminus, the 383-residue chain is Acyl-CoA dehydrogenase, short-chain specific (383 aa).

Residue Glu-367 is the Proton acceptor of the active site.

It belongs to the acyl-CoA dehydrogenase family. In terms of assembly, homotetramer. FAD serves as cofactor.

The catalysed reaction is butanoyl-CoA + oxidized [electron-transfer flavoprotein] + H(+) = (2E)-butenoyl-CoA + reduced [electron-transfer flavoprotein]. It catalyses the reaction a short-chain 2,3-saturated fatty acyl-CoA + oxidized [electron-transfer flavoprotein] + H(+) = a short-chain (2E)-enoyl-CoA + reduced [electron-transfer flavoprotein]. Its function is as follows. Has an optimum specificity for 4-carbon length fatty acyl-CoAs. The sequence is that of Acyl-CoA dehydrogenase, short-chain specific from Megasphaera elsdenii.